A 339-amino-acid polypeptide reads, in one-letter code: Putative pectinesterase 10 (339 aa).

Residues Met-1–Ala-28 form the signal peptide. The N-linked (GlcNAc...) asparagine glycan is linked to Asn-112. Thr-116 is a substrate binding site. Asp-169 functions as the Proton donor in the catalytic mechanism. Catalysis depends on Asp-190, which acts as the Nucleophile. The substrate site is built by Arg-252 and Trp-254. N-linked (GlcNAc...) asparagine glycosylation is present at Asn-322.

This sequence belongs to the pectinesterase family. In terms of tissue distribution, expressed in siliques.

The protein localises to the secreted. Its subcellular location is the cell wall. It catalyses the reaction [(1-&gt;4)-alpha-D-galacturonosyl methyl ester](n) + n H2O = [(1-&gt;4)-alpha-D-galacturonosyl](n) + n methanol + n H(+). Its pathway is glycan metabolism; pectin degradation; 2-dehydro-3-deoxy-D-gluconate from pectin: step 1/5. Functionally, acts in the modification of cell walls via demethylesterification of cell wall pectin. The polypeptide is Putative pectinesterase 10 (PME10) (Arabidopsis thaliana (Mouse-ear cress)).